A 124-amino-acid polypeptide reads, in one-letter code: Small ribosomal subunit protein bS6 (124 aa).

The protein belongs to the bacterial ribosomal protein bS6 family.

Functionally, binds together with bS18 to 16S ribosomal RNA. This is Small ribosomal subunit protein bS6 from Campylobacter lari (strain RM2100 / D67 / ATCC BAA-1060).